A 274-amino-acid chain; its full sequence is Outer surface protein A (274 aa).

Residues 1-16 (MKKYLLGIGLILALIA) form the signal peptide. Residue Cys17 is the site of N-palmitoyl cysteine attachment. A lipid anchor (S-diacylglycerol cysteine) is attached at Cys17.

The protein belongs to the OspA lipoprotein family.

The protein resides in the cell outer membrane. The protein localises to the cell surface. The sequence is that of Outer surface protein A from Borreliella burgdorferi (Lyme disease spirochete).